The primary structure comprises 301 residues: MEHVDKHAVKAFLLSLQDQICQSLESQDKSAAFEQDEWQREQGGGGRSRVLRQGSVFEQAGVNFSHVFGTKMPASATAHRPELAGRSFEAMGVSLVIHPNNPYIPTSHANVRFFIAEKEGEAPVWWFGGGFDLTPFYPFEEDCQHWHNTAKYLCAPFGDDIYEQHKVWCDKYFFLPHRNETRGVGGLFFDDLNEWGFEKSFAYTQAVGNGFIDGYLPIVQRRQDTPYGEREREFQLYRRGRYVEFNLVYDRGTLFGLQSGGRTESILMSMPPLARWEYCYEPKAGSAEADLYENYLQPREW.

A substrate-binding site is contributed by S94. 2 residues coordinate a divalent metal cation: H98 and H108. H108 functions as the Proton donor in the catalytic mechanism. 110–112 is a binding site for substrate; sequence NVR. Positions 147 and 177 each coordinate a divalent metal cation. Residues 242-277 are important for dimerization; it reads YVEFNLVYDRGTLFGLQSGGRTESILMSMPPLARWE. 260–262 lines the substrate pocket; it reads GGR.

Belongs to the aerobic coproporphyrinogen-III oxidase family. Homodimer. Requires a divalent metal cation as cofactor.

It localises to the cytoplasm. The enzyme catalyses coproporphyrinogen III + O2 + 2 H(+) = protoporphyrinogen IX + 2 CO2 + 2 H2O. It participates in porphyrin-containing compound metabolism; protoporphyrin-IX biosynthesis; protoporphyrinogen-IX from coproporphyrinogen-III (O2 route): step 1/1. Functionally, involved in the heme biosynthesis. Catalyzes the aerobic oxidative decarboxylation of propionate groups of rings A and B of coproporphyrinogen-III to yield the vinyl groups in protoporphyrinogen-IX. The chain is Oxygen-dependent coproporphyrinogen-III oxidase from Photobacterium profundum (strain SS9).